Consider the following 123-residue polypeptide: Large ribosomal subunit protein bL12 (123 aa).

The protein belongs to the bacterial ribosomal protein bL12 family. Homodimer. Part of the ribosomal stalk of the 50S ribosomal subunit. Forms a multimeric L10(L12)X complex, where L10 forms an elongated spine to which 2 to 4 L12 dimers bind in a sequential fashion. Binds GTP-bound translation factors.

In terms of biological role, forms part of the ribosomal stalk which helps the ribosome interact with GTP-bound translation factors. Is thus essential for accurate translation. This is Large ribosomal subunit protein bL12 from Finegoldia magna (strain ATCC 29328 / DSM 20472 / WAL 2508) (Peptostreptococcus magnus).